We begin with the raw amino-acid sequence, 183 residues long: Capsid protein (183 aa).

A disordered region spans residues 136-183 (NAPILSTLPETTVVRRRGRSPRRRTPSPRRRRSQSPRRRRSQSPASQC). The span at 149 to 176 (VRRRGRSPRRRTPSPRRRRSQSPRRRRS) shows a compositional bias: basic residues. Phosphoserine; by host is present on residues Ser-155, Ser-162, and Ser-170. A 1; half-length repeat occupies 155–161 (SPRRRTP). A 3 X 8 AA repeats of S-P-R-R-R-[PR]-S-Q region spans residues 155–177 (SPRRRTPSPRRRRSQSPRRRRSQ). Residues 158–175 (RRTPSPRRRRSQSPRRRR) carry the Bipartite nuclear localization signal motif. Repeat copies occupy residues 162-169 (SPRRRRSQ) and 170-177 (SPRRRRSQ). The interval 177-183 (QSPASQC) is RNA binding.

This sequence belongs to the orthohepadnavirus core antigen family. In terms of assembly, homodimerizes, then multimerizes. Interacts with cytosol exposed regions of viral L glycoprotein present in the reticulum-to-Golgi compartment. Interacts with human FLNB. Phosphorylated form interacts with host importin alpha; this interaction depends on the exposure of the NLS, which itself depends upon genome maturation and/or phosphorylation of the capsid protein. Interacts with host NUP153. Post-translationally, phosphorylated by host SRPK1, SRPK2, and maybe protein kinase C or GAPDH. Phosphorylation is critical for pregenomic RNA packaging. Protein kinase C phosphorylation is stimulated by HBx protein and may play a role in transport of the viral genome to the nucleus at the late step during the viral replication cycle.

The protein resides in the virion. It localises to the host cytoplasm. Self assembles to form an icosahedral capsid. Most capsids appear to be large particles with an icosahedral symmetry of T=4 and consist of 240 copies of capsid protein, though a fraction forms smaller T=3 particles consisting of 180 capsid proteins. Entering capsids are transported along microtubules to the nucleus. Phosphorylation of the capsid is thought to induce exposure of nuclear localization signal in the C-terminal portion of the capsid protein that allows binding to the nuclear pore complex via the importin (karyopherin-) alpha and beta. Capsids are imported in intact form through the nuclear pore into the nuclear basket, where it probably binds NUP153. Only capsids that contain the mature viral genome can release the viral DNA and capsid protein into the nucleoplasm. Immature capsids get stuck in the basket. Capsids encapsulate the pre-genomic RNA and the P protein. Pre-genomic RNA is reverse-transcribed into DNA while the capsid is still in the cytoplasm. The capsid can then either be directed to the nucleus, providing more genomes for transcription, or bud through the endoplasmic reticulum to provide new virions. The sequence is that of Capsid protein from Pan troglodytes (Chimpanzee).